Reading from the N-terminus, the 145-residue chain is Actin-depolymerizing factor 2 (145 aa).

Positions 13–145 (GMGVAPDIRD…DLEVLRERAH (133 aa)) constitute an ADF-H domain.

The protein belongs to the actin-binding proteins ADF family.

Its function is as follows. Actin-depolymerizing protein. Severs actin filaments (F-actin) and binds to actin monomers. The chain is Actin-depolymerizing factor 2 (ADF2) from Oryza sativa subsp. japonica (Rice).